The primary structure comprises 392 residues: MGSLSTANVEFCLDVFKELNSNNIGDNIFFSSLSLLYALSMVLLGARGETEEQLEKVLHFSHTVDSLKPGFKDSPKCSQAGRIHSEFGVEFSQINQPDSNCTLSIANRLYGTKTMAFHQQYLSCSEKWYQARLQTVDFEQSTEETRKTINAWVENKTNGKVANLFGKSTIDPSSVMVLVNAIYFKGQWQNKFQVRETVKSPFQLSEGKNVTVEMMYQIGTFKLAFVKEPQMQVLELPYVNNKLSMIILLPVGIANLKQIEKQLNSGTFHEWTSSSNMMEREVEVHLPRFKLETKYELNSLLKSLGVTDLFNQVKADLSGMSPTKGLYLSKAIHKSYLDVSEEGTEAAAATGDSIAVKSLPMRAQFKANHPFLFFIRHTHTNTILFCGKLASP.

The segment at glutamate 341–phenylalanine 365 is RCL.

The protein belongs to the serpin family. Ov-serpin subfamily. In terms of tissue distribution, detected in a restricted number of tissues, including lung, placenta, prostate, and tonsil.

Its subcellular location is the cytoplasm. Has no serine protease inhibitory activity, probably due to variants in the scaffold impairing conformational change. The polypeptide is Serpin B11 (SERPINB11) (Homo sapiens (Human)).